The sequence spans 205 residues: Large ribosomal subunit protein eL15 (205 aa).

Disordered stretches follow at residues Gly-70–Asn-90 and Arg-172–Asn-197.

Belongs to the eukaryotic ribosomal protein eL15 family.

The chain is Large ribosomal subunit protein eL15 (rpl15-1) from Dictyostelium discoideum (Social amoeba).